Reading from the N-terminus, the 300-residue chain is tRNA pseudouridine synthase B (300 aa).

Catalysis depends on Asp-38, which acts as the Nucleophile.

The protein belongs to the pseudouridine synthase TruB family. Type 1 subfamily.

It catalyses the reaction uridine(55) in tRNA = pseudouridine(55) in tRNA. Functionally, responsible for synthesis of pseudouridine from uracil-55 in the psi GC loop of transfer RNAs. The sequence is that of tRNA pseudouridine synthase B from Dehalococcoides mccartyi (strain ATCC BAA-2100 / JCM 16839 / KCTC 5957 / BAV1).